A 428-amino-acid chain; its full sequence is Histidinol dehydrogenase (428 aa).

Residues Ser-234, Gln-256, and His-259 each contribute to the substrate site. Residues Gln-256 and His-259 each coordinate Zn(2+). Catalysis depends on proton acceptor residues Glu-324 and His-325. Positions 325, 358, 412, and 417 each coordinate substrate. Asp-358 serves as a coordination point for Zn(2+). His-417 provides a ligand contact to Zn(2+).

Belongs to the histidinol dehydrogenase family. Zn(2+) is required as a cofactor.

The catalysed reaction is L-histidinol + 2 NAD(+) + H2O = L-histidine + 2 NADH + 3 H(+). It participates in amino-acid biosynthesis; L-histidine biosynthesis; L-histidine from 5-phospho-alpha-D-ribose 1-diphosphate: step 9/9. In terms of biological role, catalyzes the sequential NAD-dependent oxidations of L-histidinol to L-histidinaldehyde and then to L-histidine. This Pelagibacter ubique (strain HTCC1062) protein is Histidinol dehydrogenase.